We begin with the raw amino-acid sequence, 841 residues long: MSDNEIKNEAPKKLSLQRRTKTTVADGKVQVEVRKSRKIDTAAVKKAQEEAALKAKQEAEAKAQAEKTAAEQAKAEAEAAKKAEGAKVEATKKSAPAVPVMPNSKPKAAAPKAEQPKQEKALDPEKEAKKKEEAELRRKQEELARQKAEMEAKRAAENARRLAEIAREEAAENGEEFEDDRFTSSYAREADRDNDRRSEANRGRGKGGVNKAKKGDREDKNERNADRRNQKDVKGKGKNAKKGSALQQAFTKPVQVNKADVVIGETITVAELANKMAVKATEIIKTMMKMGEMVTINQVIDQETAQLVAEEMGHKVILRNENELEDAVMEDRDVDAEKVTRAPVVTIMGHVDHGKTSLLDYIRKAKVAAGEAGGITQHIGAYHVETEDGKMITFLDTPGHAAFTSMRARGAKATDIVVLVVAADDGVMPQTIEAIQHARAAGAPIVVAVNKIDKPEANPDRVEQELLQHEVVSEKFGGDVQFVPVSAKKGLGIDDLLEAILLQSEVLELTAVKEGMASGVVIESYLDKGRGPVATILVQSGTLNKGDIVLCGFEYGRVRAMRDENGKEVDSAGPSIPVEVLGLSGVPAAGDEATVVRDEKKAREVALFRQGKFREVKLARQQKAKLENMFSNMTAGDVAELNVIVKADVQGSVEAICQSLAELSTDEVKVKVVGSGVGGITETDATLAAASNAIMVGFNVRADASARRVIEAENIDLRYYSIIYELLNEIKAAMSGMLQPEFKQEIIGLAEVRDVFRHPKFGAIAGCMVTEGVVKRNNPIRVLRDNVVIFEGELESLRRFKDDVSEVRNGMECGIGVKNYNDVKVGDQIEVFEVVEVKRSI.

5 stretches are compositionally biased toward basic and acidic residues: residues 1–12 (MSDNEIKNEAPK), 52–92 (ALKA…EATK), 114–170 (EQPK…REEA), 188–202 (READ…EANR), and 213–235 (KKGD…DVKG). 2 disordered regions span residues 1-24 (MSDN…KTTV) and 52-246 (ALKA…GSAL). Positions 340–510 (TRAPVVTIMG…LLQSEVLELT (171 aa)) constitute a tr-type G domain. The interval 349–356 (GHVDHGKT) is G1. Residue 349–356 (GHVDHGKT) coordinates GTP. The segment at 374-378 (GITQH) is G2. The tract at residues 396-399 (DTPG) is G3. Residues 396–400 (DTPGH) and 450–453 (NKID) contribute to the GTP site. Residues 450 to 453 (NKID) form a G4 region. The segment at 486 to 488 (SAK) is G5.

This sequence belongs to the TRAFAC class translation factor GTPase superfamily. Classic translation factor GTPase family. IF-2 subfamily.

Its subcellular location is the cytoplasm. Functionally, one of the essential components for the initiation of protein synthesis. Protects formylmethionyl-tRNA from spontaneous hydrolysis and promotes its binding to the 30S ribosomal subunits. Also involved in the hydrolysis of GTP during the formation of the 70S ribosomal complex. The protein is Translation initiation factor IF-2 of Actinobacillus pleuropneumoniae serotype 5b (strain L20).